Here is a 473-residue protein sequence, read N- to C-terminus: Adenosylhomocysteinase (473 aa).

Substrate contacts are provided by Thr60, Asp135, and Glu197. 198–200 (TTT) contacts NAD(+). Lys227 and Asp231 together coordinate substrate. NAD(+) contacts are provided by residues Asn232, 261–266 (GFGDVG), Glu284, Asn319, 340–342 (IGH), and Asn385.

The protein belongs to the adenosylhomocysteinase family. It depends on NAD(+) as a cofactor.

Its subcellular location is the cytoplasm. It carries out the reaction S-adenosyl-L-homocysteine + H2O = L-homocysteine + adenosine. Its pathway is amino-acid biosynthesis; L-homocysteine biosynthesis; L-homocysteine from S-adenosyl-L-homocysteine: step 1/1. May play a key role in the regulation of the intracellular concentration of adenosylhomocysteine. This Bradyrhizobium diazoefficiens (strain JCM 10833 / BCRC 13528 / IAM 13628 / NBRC 14792 / USDA 110) protein is Adenosylhomocysteinase.